A 126-amino-acid chain; its full sequence is Hydrogenase maturation factor HypA (126 aa).

Ni(2+) is bound at residue His-2. Zn(2+)-binding residues include Cys-78, Cys-81, Cys-97, and Cys-100.

This sequence belongs to the HypA/HybF family.

Functionally, involved in the maturation of [NiFe] hydrogenases. Required for nickel insertion into the metal center of the hydrogenase. This is Hydrogenase maturation factor HypA from Methanococcus maripaludis (strain DSM 14266 / JCM 13030 / NBRC 101832 / S2 / LL).